Here is a 436-residue protein sequence, read N- to C-terminus: Repulsive guidance molecule B (436 aa).

Residues 1–48 form the signal peptide; it reads MGVRAAPSCAAAPAAAGAEQSRRPGLWPPSPPPPLLLLLLLSLGLLHA. N-linked (GlcNAc...) asparagine glycosylation is present at Asn-123. Cystine bridges form between Cys-142-Cys-229 and Cys-166-Cys-315. N-linked (GlcNAc...) asparagine glycosylation occurs at Asn-386. The GPI-anchor amidated cysteine moiety is linked to residue Cys-415. Residues 416 to 436 constitute a propeptide, removed in mature form; sequence GGCRDLPVGLGLTCLILIMFL.

It belongs to the repulsive guidance molecule (RGM) family. As to quaternary structure, homooligomer. Interacts with DRGX. Interacts with BMP2 and BMP4. Interacts with the BMP type I receptors ACVR1, BMPR1A and BMPR1B and with the BMP type II receptor ACVR2B. The functional complex with its receptor NEO1/neogenin appears to be a heterotetramer with a 2:2 stoichiometry, RGM molecules acting as staples that bring two NEO1 receptors together without interacting themselves, this arrangement leads to activation of downstream signaling via RhoA. In terms of processing, GPI-anchored. Autocatalytically cleaved at low pH; the two chains remain linked via two disulfide bonds. In terms of tissue distribution, detected in neonatal and adult dorsal root ganglion sensory neurons, spinal cord, and brain (at protein level). Also expressed at high levels in retinal ganglion cells of developing mouse, extending to the optic nerve (at protein level). Expressed in testis, epididymis, ovary, uterus, and pituitary.

The protein localises to the cell membrane. Its subcellular location is the membrane raft. Member of the repulsive guidance molecule (RGM) family that contributes to the patterning of the developing nervous system. Acts as a bone morphogenetic protein (BMP) coreceptor that potentiates BMP signaling. Promotes neuronal adhesion. May inhibit neurite outgrowth. This Mus musculus (Mouse) protein is Repulsive guidance molecule B.